A 248-amino-acid polypeptide reads, in one-letter code: MRTLILLIQFFTRIPLPIQINMDEINLKKGSALLPFVGVIIGAWNWLIFTLVSLVMPLPVAIIAGLFAEIIITGGFHVDALADTADGLFSSRKRERMLEIMKDSRVGANGVIAICFYFLFYGALFLSVPDTQQIGWLFFVLPIVAKGVTMLLFAKMTYAGSKEGLGSIFLGVPWWPIVIAQVIVLVALGAFFSYIGVIAYAGVILFTIIYRAFVYKRIGGMNGDTLGAGGQMGQLICLFCLVLLWGLI.

The next 7 membrane-spanning stretches (helical) occupy residues 24 to 44, 70 to 90, 106 to 126, 134 to 154, 168 to 188, 189 to 209, and 228 to 248; these read EINL…IGAW, IIIT…GLFS, VGAN…ALFL, IGWL…LLFA, IFLG…LVAL, GAFF…FTII, and AGGQ…WGLI.

The protein belongs to the CobS family. Mg(2+) serves as cofactor.

It localises to the cell membrane. It catalyses the reaction alpha-ribazole + adenosylcob(III)inamide-GDP = adenosylcob(III)alamin + GMP + H(+). The enzyme catalyses alpha-ribazole 5'-phosphate + adenosylcob(III)inamide-GDP = adenosylcob(III)alamin 5'-phosphate + GMP + H(+). It functions in the pathway cofactor biosynthesis; adenosylcobalamin biosynthesis; adenosylcobalamin from cob(II)yrinate a,c-diamide: step 7/7. In terms of biological role, joins adenosylcobinamide-GDP and alpha-ribazole to generate adenosylcobalamin (Ado-cobalamin). Also synthesizes adenosylcobalamin 5'-phosphate from adenosylcobinamide-GDP and alpha-ribazole 5'-phosphate. The protein is Adenosylcobinamide-GDP ribazoletransferase of Listeria monocytogenes serotype 4a (strain HCC23).